The sequence spans 78 residues: Defensin-like protein 201 (78 aa).

An N-terminal signal peptide occupies residues 1–22 (MRNLINFAVLIMTIFIVSASGA). Disulfide bonds link Cys-32–Cys-78, Cys-41–Cys-61, Cys-46–Cys-71, and Cys-50–Cys-73.

The protein belongs to the DEFL family.

The protein localises to the secreted. In Arabidopsis thaliana (Mouse-ear cress), this protein is Defensin-like protein 201.